Reading from the N-terminus, the 201-residue chain is Small ribosomal subunit protein uS4 (201 aa).

Positions 1-42 are disordered; sequence MARYTGPVTRKSRRLGTDLVGGDQSFEKRPYPPGQHGRARIK. Positions 91 to 157 constitute an S4 RNA-binding domain; it reads SRLDNVVYRA…VPFQIARETA (67 aa).

The protein belongs to the universal ribosomal protein uS4 family. As to quaternary structure, part of the 30S ribosomal subunit. Contacts protein S5. The interaction surface between S4 and S5 is involved in control of translational fidelity.

In terms of biological role, one of the primary rRNA binding proteins, it binds directly to 16S rRNA where it nucleates assembly of the body of the 30S subunit. Its function is as follows. With S5 and S12 plays an important role in translational accuracy. This chain is Small ribosomal subunit protein uS4, found in Mycobacterium marinum (strain ATCC BAA-535 / M).